Here is a 499-residue protein sequence, read N- to C-terminus: Neuronal acetylcholine receptor subunit alpha-3 (499 aa).

The first 25 residues, 1-25, serve as a signal peptide directing secretion; sequence MGVVLPPPPLSMLMLVLMLLPVASA. At 26 to 244 the chain is on the extracellular side; the sequence is SEAEHRLFQY…PLFYTINLII (219 aa). N-linked (GlcNAc...) asparagine glycans are attached at residues Asn49 and Asn166. Cystine bridges form between Cys153–Cys167 and Cys217–Cys218. A helical transmembrane segment spans residues 245-260; the sequence is PCLLISFLTVLVFYLP. Residues 261-262 are Cytoplasmic-facing; the sequence is SD. Residues 263–279 traverse the membrane as a helical segment; the sequence is CGEKVTLCISVLLSLTV. Glu265 serves as a coordination point for Na(+). Over 280 to 301 the chain is Extracellular; the sequence is FLLVITETIPSTSLVIPLIGEY. A helical membrane pass occupies residues 302–320; sequence LLFTMIFVTLSIVITVFVL. Topologically, residues 321 to 468 are cytoplasmic; the sequence is NVHYRTPTTH…QDDWKYVAMV (148 aa). Phosphoserine is present on residues Ser407 and Ser410. Residues 469 to 487 form a helical membrane-spanning segment; the sequence is IDRIFLWVFILVCILGTAG. Topologically, residues 488 to 499 are extracellular; the sequence is LFLQPLMARDDT.

Belongs to the ligand-gated ion channel (TC 1.A.9) family. Acetylcholine receptor (TC 1.A.9.1) subfamily. Alpha-3/CHRNA3 sub-subfamily. As to quaternary structure, neuronal AChR is composed of two different types of subunits: alpha and beta. CHRNA3/Alpha-3 subunit can be combined to CHRNB2/beta-2 or CHRNB4/beta-4 to give rise to functional receptors. Part of a complex composed of STUB1/CHIP, VCP/p97, CHRNA3, and UBXN2A that modulates the ubiquitination and endoplasmic reticulum-associated degradation (ERAD) of CHRNA3. Within the complex UBXN2A acts as a scaffold protein required for the interaction of CHRNA3 with VCP/p97, this interaction also inhibits CHRNA3 ubiquitination by STUB1/CHIP and subsequently ERAD. Interacts with UBXN2A (via SEP domain), the interaction is required for the interaction of CHRNA3 in the STUB1:VCP:UBXN2A complex. Interacts with RIC3; which is required for proper folding and assembly. Interacts with LYPD6. Post-translationally, ubiquitinated; by STUB1/CHIP and thereafter degraded by the 26S proteosome complex. In terms of tissue distribution, expressed in the brain (at protein level).

Its subcellular location is the synaptic cell membrane. The protein localises to the cell membrane. The protein resides in the endoplasmic reticulum. It localises to the golgi apparatus. The enzyme catalyses K(+)(in) = K(+)(out). It carries out the reaction Na(+)(in) = Na(+)(out). The catalysed reaction is Ca(2+)(in) = Ca(2+)(out). With respect to regulation, activated by a myriad of ligands such as acetylcholine, cytisine, nicotine, choline and epibatidine. The heteropentamer CHRNA3:CHRNB2 activity is blocked by alpha-conotoxins ImI, ImII, PnIA, GID and MII. The heteropentamer CHRNA3:CHRNB4 activity is blocked by the alpha-conotoxin ImI. In terms of biological role, component of neuronal acetylcholine receptors (nAChRs) that function as pentameric, ligand-gated cation channels with high calcium permeability among other activities. nAChRs are excitatory neurotrasnmitter receptors formed by a collection of nAChR subunits known to mediate synaptic transmission in the nervous system and the neuromuscular junction. Each nAchR subunit confers differential attributes to channel properties, including activation, deactivation and desensitization kinetics, pH sensitivity, cation permeability, and binding to allosteric modulators. CHRNA3 forms heteropentameric neuronal acetylcholine receptors with CHRNA5, CHRNB2 and CHRNB4. CHRNA3:CHRNB4 being predominant in neurons of the autonomic ganglia, it is known as ganglionic nicotinic receptor. CHRNA3:CHRNB4 or CHRNA3:CHRNA5:CHRNB4 play also an important role in the habenulo-interpeduncular tract, modulating the mesolimbic dopamine system and affecting reward circuits and addiction. Hypothalamic CHRNA3:CHRNB4 nAChR activation by nicotine leads to activation of POMC neurons and a decrease in food intake. Also expressed in the urothelium where it modulates reflex bladder activity by increasing intracellular calcium through extracellular influx and basal ATP release. In Mus musculus (Mouse), this protein is Neuronal acetylcholine receptor subunit alpha-3 (Chrna3).